Here is a 239-residue protein sequence, read N- to C-terminus: MRAQPPPRTLLSLALALLFLSMSWAKRGCSSSSPKLLSQLKSQANITGNTASLLEPYILHQNLNTLTLRAACTEHPVAFPSEDMLRQLSKPDFLSTVHATLGRVWHQLGAFRQQFPKIQDFPELERARQNIQGIRNNVYCMARLLHPPLEIPEPTQADSGTSRPTTTAPGIFQIKIDSCRFLWGYHRFMGSVGRVFEEWGDGSRRSRRHSPLWAWLKGDHRIRPSRSSQSAMLRSLVPR.

The first 25 residues, 1 to 25 (MRAQPPPRTLLSLALALLFLSMSWA), serve as a signal peptide directing secretion. 2 disulfides stabilise this stretch: cysteine 29–cysteine 140 and cysteine 72–cysteine 179. The propeptide occupies 209–239 (HSPLWAWLKGDHRIRPSRSSQSAMLRSLVPR).

It belongs to the LIF/OSM family. Propeptide processing is not important for receptor binding activity but may be important growth-inhibitory activity. Widely expressed. Expressed at higher levels in liver, skin and spleen.

The protein localises to the secreted. Functionally, growth regulator. Inhibits the proliferation of a number of tumor cell lines. It regulates cytokine production, including IL-6, G-CSF and GM-CSF from endothelial cells. Uses only type II OSM receptor (heterodimers composed of OSMR and IL6ST). Involved in the maturation of fetal hepatocytes, thereby promoting liver development and regeneration. In Rattus norvegicus (Rat), this protein is Oncostatin-M (Osm).